Reading from the N-terminus, the 421-residue chain is Testin (421 aa).

The PET domain maps to 92-199 (MILTNPVAAK…GDVKLPREMN (108 aa)). The disordered stretch occupies residues 133–164 (EKQPVAGSEGAQYRKKQLAKQLPAHDQDPSKC). Basic and acidic residues predominate over residues 155-164 (PAHDQDPSKC). 3 LIM zinc-binding domains span residues 234 to 297 (YSCY…CDSE), 299 to 359 (PRCA…NHAV), and 362 to 421 (QGCH…KMMS).

It belongs to the prickle / espinas / testin family. Interacts via LIM domain 1 with ZYX. Interacts (via LIM domain 3) with ENAH and VASP. Interacts with ALKBH4, talin, actin, alpha-actinin, GRIP1 and PXN. Interacts (via LIM domain 2) with ACTL7A (via N-terminus). Heterodimer with ACTL7A; the heterodimer interacts with ENAH to form a heterotrimer.

The protein localises to the cytoplasm. It is found in the cell junction. It localises to the focal adhesion. Functionally, scaffold protein that may play a role in cell adhesion, cell spreading and in the reorganization of the actin cytoskeleton. Plays a role in the regulation of cell proliferation. May act as a tumor suppressor. The protein is Testin (TES) of Sus scrofa (Pig).